The sequence spans 240 residues: UDP-2,3-diacylglucosamine hydrolase (240 aa).

Residues Asp-8, His-10, Asp-41, Asn-79, and His-114 each contribute to the Mn(2+) site. A substrate-binding site is contributed by 79–80; that stretch reads NR. Asp-122, Ser-160, Asn-164, Lys-167, and His-195 together coordinate substrate. Residues His-195 and His-197 each coordinate Mn(2+).

This sequence belongs to the LpxH family. Mn(2+) is required as a cofactor.

The protein localises to the cell inner membrane. The catalysed reaction is UDP-2-N,3-O-bis[(3R)-3-hydroxytetradecanoyl]-alpha-D-glucosamine + H2O = 2-N,3-O-bis[(3R)-3-hydroxytetradecanoyl]-alpha-D-glucosaminyl 1-phosphate + UMP + 2 H(+). It participates in glycolipid biosynthesis; lipid IV(A) biosynthesis; lipid IV(A) from (3R)-3-hydroxytetradecanoyl-[acyl-carrier-protein] and UDP-N-acetyl-alpha-D-glucosamine: step 4/6. Hydrolyzes the pyrophosphate bond of UDP-2,3-diacylglucosamine to yield 2,3-diacylglucosamine 1-phosphate (lipid X) and UMP by catalyzing the attack of water at the alpha-P atom. Involved in the biosynthesis of lipid A, a phosphorylated glycolipid that anchors the lipopolysaccharide to the outer membrane of the cell. The chain is UDP-2,3-diacylglucosamine hydrolase from Proteus mirabilis (strain HI4320).